Reading from the N-terminus, the 429-residue chain is Enolase (429 aa).

Residue Gln-163 coordinates (2R)-2-phosphoglycerate. Glu-205 acts as the Proton donor in catalysis. Mg(2+) contacts are provided by Asp-242, Glu-285, and Asp-312. Residues Lys-337, Arg-366, Ser-367, and Lys-388 each contribute to the (2R)-2-phosphoglycerate site. Residue Lys-337 is the Proton acceptor of the active site.

Belongs to the enolase family. Mg(2+) is required as a cofactor.

It is found in the cytoplasm. The protein localises to the secreted. Its subcellular location is the cell surface. It carries out the reaction (2R)-2-phosphoglycerate = phosphoenolpyruvate + H2O. Its pathway is carbohydrate degradation; glycolysis; pyruvate from D-glyceraldehyde 3-phosphate: step 4/5. In terms of biological role, catalyzes the reversible conversion of 2-phosphoglycerate (2-PG) into phosphoenolpyruvate (PEP). It is essential for the degradation of carbohydrates via glycolysis. The sequence is that of Enolase from Methylorubrum populi (strain ATCC BAA-705 / NCIMB 13946 / BJ001) (Methylobacterium populi).